Reading from the N-terminus, the 337-residue chain is Ornithine carbamoyltransferase (337 aa).

Residues 56 to 59 (STRT), Gln-83, Arg-107, and 134 to 137 (HPTQ) each bind carbamoyl phosphate. L-ornithine is bound by residues Asn-168, Asp-232, and 236–237 (SM). Residues 274-275 (CL) and Arg-320 contribute to the carbamoyl phosphate site.

Belongs to the aspartate/ornithine carbamoyltransferase superfamily. OTCase family.

It localises to the cytoplasm. The enzyme catalyses carbamoyl phosphate + L-ornithine = L-citrulline + phosphate + H(+). The protein operates within amino-acid biosynthesis; L-arginine biosynthesis; L-arginine from L-ornithine and carbamoyl phosphate: step 1/3. Functionally, reversibly catalyzes the transfer of the carbamoyl group from carbamoyl phosphate (CP) to the N(epsilon) atom of ornithine (ORN) to produce L-citrulline. This chain is Ornithine carbamoyltransferase (argI), found in Shigella flexneri.